The sequence spans 210 residues: Syntaxin-binding protein 6 (210 aa).

Ser2 is modified (N-acetylserine). The v-SNARE coiled-coil homology domain maps to 151–210 (GNSILHSAADSVTSAVQKASQALNERGERLGRAEEKTEDMKNSAQQFAETAHKLAMKHKC).

Part of a ternary complex containing SNAP25 and STX1A that can be dissociated by NAPA and NSF. Interacts with STX4A.

Its subcellular location is the cytoplasm. The protein localises to the membrane. Forms non-fusogenic complexes with SNAP25 and STX1A and may thereby modulate the formation of functional SNARE complexes and exocytosis. This Mus musculus (Mouse) protein is Syntaxin-binding protein 6 (Stxbp6).